A 574-amino-acid polypeptide reads, in one-letter code: Interleukin-1 receptor-like 2 (574 aa).

The signal sequence occupies residues M1–A21. At D22–R338 the chain is on the extracellular side. 3 consecutive Ig-like C2-type domains span residues E25–T113, P132–Y215, and Y225–A321. 3 N-linked (GlcNAc...) asparagine glycosylation sites follow: N43, N55, and N111. Cysteines 44 and 97 form a disulfide. Residues C149 and C199 are joined by a disulfide bond. N-linked (GlcNAc...) asparagine glycans are attached at residues N231, N237, N253, N269, N290, and N302. C252 and C319 form a disulfide bridge. A helical membrane pass occupies residues A339–Y359. The Cytoplasmic segment spans residues N360–P574. The TIR domain maps to K384–M539. Residue E470 is part of the active site.

Belongs to the interleukin-1 receptor family. As to quaternary structure, interacts with IL1RAP; the association is enhanced by IL36B indicative for an functional signaling complex and inhibited by IL36RN. Expressed in bone marrow-derived dendritic cells, splenic CD4(+) T-cells, bone marrow-derived macrophages and bone marrow-derived neutrophils.

The protein resides in the membrane. The catalysed reaction is NAD(+) + H2O = ADP-D-ribose + nicotinamide + H(+). Its function is as follows. Receptor for interleukin-36 (IL36A, IL36B and IL36G). After binding to interleukin-36 associates with the coreceptor IL1RAP to form the interleukin-36 receptor complex which mediates interleukin-36-dependent activation of NF-kappa-B, MAPK and other pathways. The IL-36 signaling system is thought to be present in epithelial barriers and to take part in local inflammatory response; it is similar to the IL-1 system. Seems to be involved in skin inflammatory response by induction of the IL-23/IL-17/IL-22 pathway. This is Interleukin-1 receptor-like 2 (Il1rl2) from Mus musculus (Mouse).